A 514-amino-acid chain; its full sequence is 2-isopropylmalate synthase (514 aa).

The 264-residue stretch at 5 to 268 (LIIFDTTLRD…DVGIDTTQIV (264 aa)) folds into the Pyruvate carboxyltransferase domain. Mn(2+) contacts are provided by Asp14, His202, His204, and Asn239. The regulatory domain stretch occupies residues 395–514 (KFVSLSQHSE…KDDKLNPQRS (120 aa)).

Belongs to the alpha-IPM synthase/homocitrate synthase family. LeuA type 1 subfamily. In terms of assembly, homodimer. Requires Mn(2+) as cofactor.

Its subcellular location is the cytoplasm. The catalysed reaction is 3-methyl-2-oxobutanoate + acetyl-CoA + H2O = (2S)-2-isopropylmalate + CoA + H(+). It functions in the pathway amino-acid biosynthesis; L-leucine biosynthesis; L-leucine from 3-methyl-2-oxobutanoate: step 1/4. Functionally, catalyzes the condensation of the acetyl group of acetyl-CoA with 3-methyl-2-oxobutanoate (2-ketoisovalerate) to form 3-carboxy-3-hydroxy-4-methylpentanoate (2-isopropylmalate). The polypeptide is 2-isopropylmalate synthase (Burkholderia multivorans (strain ATCC 17616 / 249)).